The sequence spans 391 residues: Probable sugar efflux transporter (391 aa).

12 helical membrane passes run 16-36, 51-71, 82-102, 103-123, 138-158, 170-190, 210-230, 247-267, 277-297, 300-320, 338-358, and 361-381; these read VFVF…PVAL, VGLM…PLML, LLFL…AWNF, WVLL…WSIT, QALG…LPLG, TFGV…KLLP, PLLV…FTTY, ITTL…FLFG, FIAF…VFKN, WVIF…TIAL, IFSG…SIVI, and LGLE…LFWL.

This sequence belongs to the major facilitator superfamily. SotB (TC 2.A.1.2) family.

It localises to the cell inner membrane. In terms of biological role, involved in the efflux of sugars. The physiological role may be the reduction of the intracellular concentration of toxic sugars or sugar metabolites. The sequence is that of Probable sugar efflux transporter from Helicobacter pylori (strain P12).